The sequence spans 729 residues: Fatty acid oxidation complex subunit alpha (729 aa).

The enoyl-CoA hydratase/isomerase stretch occupies residues 1-189 (MLYQSETLQL…KIGLVDAVVD (189 aa)). Substrate is bound at residue Asp296. Residues 311 to 729 (AAPKLAAVLG…LLDVSTNQPA (419 aa)) form a 3-hydroxyacyl-CoA dehydrogenase region. NAD(+)-binding positions include Met324, Asp343, 400-402 (VVE), Lys407, and Ser429. His450 acts as the For 3-hydroxyacyl-CoA dehydrogenase activity in catalysis. An NAD(+)-binding site is contributed by Asn453. The substrate site is built by Asn500 and Tyr660.

The protein in the N-terminal section; belongs to the enoyl-CoA hydratase/isomerase family. This sequence in the C-terminal section; belongs to the 3-hydroxyacyl-CoA dehydrogenase family. In terms of assembly, heterotetramer of two alpha chains (FadB) and two beta chains (FadA).

The enzyme catalyses a (3S)-3-hydroxyacyl-CoA + NAD(+) = a 3-oxoacyl-CoA + NADH + H(+). It catalyses the reaction a (3S)-3-hydroxyacyl-CoA = a (2E)-enoyl-CoA + H2O. The catalysed reaction is a 4-saturated-(3S)-3-hydroxyacyl-CoA = a (3E)-enoyl-CoA + H2O. It carries out the reaction (3S)-3-hydroxybutanoyl-CoA = (3R)-3-hydroxybutanoyl-CoA. The enzyme catalyses a (3Z)-enoyl-CoA = a 4-saturated (2E)-enoyl-CoA. It catalyses the reaction a (3E)-enoyl-CoA = a 4-saturated (2E)-enoyl-CoA. It participates in lipid metabolism; fatty acid beta-oxidation. Involved in the aerobic and anaerobic degradation of long-chain fatty acids via beta-oxidation cycle. Catalyzes the formation of 3-oxoacyl-CoA from enoyl-CoA via L-3-hydroxyacyl-CoA. It can also use D-3-hydroxyacyl-CoA and cis-3-enoyl-CoA as substrate. The protein is Fatty acid oxidation complex subunit alpha of Yersinia pseudotuberculosis serotype O:1b (strain IP 31758).